The sequence spans 69 residues: uncharacterized protein (69 aa).

Positions 21 to 64 (LNLLKGGEEKISEVELKLDEMEKKMDSLLVQLEDLHRDNNDLAK) form a coiled coil.

This is an uncharacterized protein from Saccharomyces cerevisiae (strain ATCC 204508 / S288c) (Baker's yeast).